The primary structure comprises 271 residues: Putative phosphoenolpyruvate synthase regulatory protein (271 aa).

151–158 (GVSRSGKT) is a binding site for ADP.

Belongs to the pyruvate, phosphate/water dikinase regulatory protein family. PSRP subfamily.

The enzyme catalyses [pyruvate, water dikinase] + ADP = [pyruvate, water dikinase]-phosphate + AMP + H(+). It carries out the reaction [pyruvate, water dikinase]-phosphate + phosphate + H(+) = [pyruvate, water dikinase] + diphosphate. Bifunctional serine/threonine kinase and phosphorylase involved in the regulation of the phosphoenolpyruvate synthase (PEPS) by catalyzing its phosphorylation/dephosphorylation. The chain is Putative phosphoenolpyruvate synthase regulatory protein from Burkholderia mallei (strain NCTC 10247).